A 131-amino-acid chain; its full sequence is Large ribosomal subunit protein bL17 (131 aa).

It belongs to the bacterial ribosomal protein bL17 family. Part of the 50S ribosomal subunit. Contacts protein L32.

This chain is Large ribosomal subunit protein bL17, found in Finegoldia magna (strain ATCC 29328 / DSM 20472 / WAL 2508) (Peptostreptococcus magnus).